Here is a 141-residue protein sequence, read N- to C-terminus: uncharacterized protein (141 aa).

The next 2 helical transmembrane spans lie at 41 to 61 (LIMLLVAICSSLSGNTVNYLF) and 95 to 115 (IIFLISFPFWGCFVSLFSGFF).

Its subcellular location is the cell membrane. This is an uncharacterized protein from Rickettsia prowazekii (strain Madrid E).